Consider the following 450-residue polypeptide: Glucose-6-phosphate isomerase (450 aa).

The active-site Proton donor is Glu-290. Catalysis depends on residues His-311 and Lys-425.

Belongs to the GPI family.

The protein localises to the cytoplasm. The enzyme catalyses alpha-D-glucose 6-phosphate = beta-D-fructose 6-phosphate. It functions in the pathway carbohydrate biosynthesis; gluconeogenesis. Its pathway is carbohydrate degradation; glycolysis; D-glyceraldehyde 3-phosphate and glycerone phosphate from D-glucose: step 2/4. Its function is as follows. Catalyzes the reversible isomerization of glucose-6-phosphate to fructose-6-phosphate. The protein is Glucose-6-phosphate isomerase of Lactiplantibacillus plantarum (strain ATCC BAA-793 / NCIMB 8826 / WCFS1) (Lactobacillus plantarum).